Here is a 1374-residue protein sequence, read N- to C-terminus: MSTEADEGITFSVPPFAPSGFCTIPEGGICRRGGAAAVGEGEEHQLPPPPPGSFWNVESAAAPGIGCPAATSSSSATRGRGSSVGGGSRRTTVAYVINEASQGQLVVAESEALQSLREACETVGATLETLHFGKLDFGETTVLDRFYNADIAVVEMSDAFRQPSLFYHLGVRESFSMANNIILYCDTNSDSLQSLKEIICQKNTMCTGNYTFVPYMITPHNKVYCCDSSFMKGLTELMQPNFELLLGPICLPLVDRFIQLLKVAQASSSQYFRESILNDIRKARNLYTGKELAAELARIRQRVDNIEVLTADIVINLLLSYRDIQDYDSIVKLVETLEKLPTFDLASHHHVKFHYAFALNRRNLPGDRAKALDIMIPMVQSEGQVASDMYCLVGRIYKDMFLDSNFTDTESRDHGASWFKKAFESEPTLQSGINYAVLLLAAGHQFESSFELRKVGVKLSSLLGKKGNLEKLQSYWEVGFFLGASVLANDHMRVIQASEKLFKLKTPAWYLKSIVETILIYKHFVKLTTEQPVAKQELVDFWMDFLVEATKTDVTVVRFPVLILEPTKIYQPSYLSINNEVEEKTISIWHVLPDDKKGIHEWNFSASSVRGVSISKFEERCCFLYVLHNSDDFQIYFCTELHCKKFFEMVNTITEEKGRSTEEGDCESDLLEYDYEYDENGDRVVLGKGTYGIVYAGRDLSNQVRIAIKEIPERDSRYSQPLHEEIALHKHLKHKNIVQYLGSFSENGFIKIFMEQVPGGSLSALLRSKWGPLKDNEQTIGFYTKQILEGLKYLHDNQIVHRDIKGDNVLINTYSGVLKISDFGTSKRLAGINPCTETFTGTLQYMAPEIIDKGPRGYGKAADIWSLGCTIIEMATGKPPFYELGEPQAAMFKVGMFKVHPEIPESMSAEAKAFILKCFEPDPDKRACANDLLVDEFLKVSSKKKKTQPKLSALSAGSNEYLRSISLPVPVLVEDTSSSSEYGSVSPDTELKVDPFSFKTRAKSCGERDVKGIRTLFLGIPDENFEDHSAPPSPEEKDSGFFMLRKDSERRATLHRILTEDQDKIVRNLMESLAQGAEEPKLKWEHITTLIASLREFVRSTDRKIIATTLSKLKLELDFDSHGISQVQVVLFGFQDAVNKVLRNHNIKPHWMFALDSIIRKAVQTAITILVPELRPHFSLASESDTADQEDLDVEDDHEEQPSNQTVRRPQAVIEDAVATSGVSTLSSTVSHDSQSAHRSLNVQLGRMKIETNRLLEELVRKEKELQALLHRAIEEKDQEIKHLKLKSQPIEIPELPVFHLNSSGTNTEDSELTDWLRVNGADEDTISRFLAEDYTLLDVLYYVTRDDLKCLRLRGGMLCTLWKAIIDFRNKQT.

Positions 68-87 (PAATSSSSATRGRGSSVGGG) are disordered. Residues 69 to 81 (AATSSSSATRGRG) show a composition bias toward low complexity. Asymmetric dimethylarginine; by PRMT1 is present on residues R78 and R80. S83 is modified (phosphoserine; by PIM1 and PKB/AKT1). The interval 649–1374 (MVNTITEEKG…AIIDFRNKQT (726 aa)) is interaction with PPIA/CYPA. The 259-residue stretch at 680-938 (NGDRVVLGKG…ANDLLVDEFL (259 aa)) folds into the Protein kinase domain. ATP contacts are provided by residues 686 to 694 (LGKGTYGIV) and K709. Y718 carries the post-translational modification Phosphotyrosine. D803 (proton acceptor) is an active-site residue. The residue at position 813 (T813) is a Phosphothreonine; by autocatalysis. Phosphothreonine; by autocatalysis, MELK and MAP3K6 is present on T838. T842 is subject to Phosphothreonine; by autocatalysis. S958 carries the post-translational modification Phosphoserine. S966 carries the phosphoserine; by autocatalysis modification. Phosphoserine occurs at positions 1029 and 1033. A disordered region spans residues 1182-1209 (SESDTADQEDLDVEDDHEEQPSNQTVRR). Positions 1185–1199 (DTADQEDLDVEDDHE) are enriched in acidic residues. Residues 1245 to 1285 (LGRMKIETNRLLEELVRKEKELQALLHRAIEEKDQEIKHLK) adopt a coiled-coil conformation.

Belongs to the protein kinase superfamily. STE Ser/Thr protein kinase family. MAP kinase kinase kinase subfamily. As to quaternary structure, homodimer when inactive. Binds both upstream activators and downstream substrates in multimolecular complexes. Part of a cytoplasmic complex made of HIPK1, DAB2IP and MAP3K5 in response to TNF. This complex formation promotes MAP3K5-JNK activation and subsequent apoptosis. Interacts with SOCS1 which recognizes phosphorylation of Tyr-718 and induces MAP3K5/ASK1 degradation in endothelial cells. Interacts with the 14-3-3 family proteins such as YWHAB, YWHAE, YWHAQ, YWHAH, YWHAZ and SFN. Interacts with ARRB2, BIRC2, DAB2IP, IGF1R, MAP3K6/ASK2, PGAM5, PIM1, PPP5C, SOCS1, STUB1, TRAF2, TRAF6 and TXN. Interacts with ERN1 in a TRAF2-dependent manner. Interacts with calcineurin subunit PPP3R1. Interacts with PPM1L. Interacts (via N-terminus) with RAF1 and this interaction inhibits the proapoptotic function of MAP3K5. Interacts with DAB2IP (via N-terminus C2 domain); the interaction occurs in a TNF-alpha-dependent manner. Interacts with DUSP13A; may positively regulate apoptosis. Interacts with DAXX. Interacts with RC3H2. Interacts with PPIA/CYPA. Interacts with PRMT1; the interaction results in MAP3K5 methylation by PRMT1 which inhibits MAP3K5 activation. Interacts with TRAF2; the interaction is inhibited by PRMT1. Interacts with TRIM48. (Microbial infection) Interacts with HIV-1 Nef; this interaction inhibits MAP3K5 signaling. Mg(2+) serves as cofactor. Post-translationally, phosphorylated at Thr-838 through autophosphorylation and by MAP3K6/ASK2 which leads to activation. Thr-838 is dephosphorylated by PPP5C. Ser-83 and Ser-1033 are inactivating phosphorylation sites, the former of which is phosphorylated by AKT1. Phosphorylated at Ser-966 which induces association of MAP3K5/ASK1 with the 14-3-3 family proteins and suppresses MAP3K5/ASK1 activity. Calcineurin (CN) dephosphorylates this site. Also dephosphorylated and activated by PGAM5. Phosphorylation at Ser-966 in response to oxidative stress is negatively regulated by PPIA/CYPA. Ubiquitinated. Tumor necrosis factor (TNF) induces TNFR2-dependent ubiquitination, leading to proteasomal degradation. Ubiquitinated by RC3H2 in a TRIM48-dependent manner. In terms of processing, methylation at Arg-78 and Arg-80 by PRMT1 promotes association of MAP3K5 with thioredoxin and negatively regulates MAP3K5 association with TRAF2, inhibiting MAP3K5 activation. Methylation is blocked by ubiquitination of PRMT1 by TRIM48. As to expression, abundantly expressed in heart and pancreas.

It localises to the cytoplasm. It is found in the endoplasmic reticulum. The enzyme catalyses L-seryl-[protein] + ATP = O-phospho-L-seryl-[protein] + ADP + H(+). The catalysed reaction is L-threonyl-[protein] + ATP = O-phospho-L-threonyl-[protein] + ADP + H(+). Its activity is regulated as follows. Activated by various stressors, including oxidative stress, endoplasmic reticulum stress, and calcium overload, as well as by receptor-mediated inflammatory signals, such as the tumor necrosis factor (TNF) and lipopolysaccharide (LPS). Homophilic association of MAP3K5/ASK1 through the C-terminal coiled-coil domains and the heteromeric complex formation of MAP3K5/ASK1 with the reduced form of thioredoxin (TXN), constitutes an inactive form of the kinase. Upon ROS-induced dissociation of TXN from MAP3K5/ASK1, TRAF2 and TRAF6 are reciprocally recruited to MAP3K5/ASK1 and form the active MAP3K5/ASK1 signalosome, in which TRAF2 and TRAF6 appear to facilitate the active configuration of MAP3K5/ASK1. MAP3K5/ASK1 activity is also regulated through several phosphorylation and dephosphorylation events. Thr-838 is an activating phosphorylation site that is autophosphorylated and phosphorylated by MAP3K6/ASK2 and dephosphorylated by PPP5C. Ser-83 and Ser-1033 are inactivating phosphorylation sites, the former of which is phosphorylated by AKT1. Phosphorylation of Ser-966 induces association of MAP3K5/ASK1 with the 14-3-3 family proteins, which suppresses MAP3K5/ASK1 activity. Calcium/calmodulin-activated protein phosphatase calcineurin (PPP3CA) has been shown to directly dephosphorylate this site. SOCS1 binds to ASK1 by recognizing phosphorylation of Tyr-718 and induces MAP3K5/ASK1 degradation in endothelial cells. Also dephosphorylated and activated by PGAM5. Contains an N-terminal autoinhibitory domain. Once activated targeted for proteasomal degradation by RC3H2-mediated ubiquitination. Serine/threonine kinase which acts as an essential component of the MAP kinase signal transduction pathway. Plays an important role in the cascades of cellular responses evoked by changes in the environment. Mediates signaling for determination of cell fate such as differentiation and survival. Plays a crucial role in the apoptosis signal transduction pathway through mitochondria-dependent caspase activation. MAP3K5/ASK1 is required for the innate immune response, which is essential for host defense against a wide range of pathogens. Mediates signal transduction of various stressors like oxidative stress as well as by receptor-mediated inflammatory signals, such as the tumor necrosis factor (TNF) or lipopolysaccharide (LPS). Once activated, acts as an upstream activator of the MKK/JNK signal transduction cascade and the p38 MAPK signal transduction cascade through the phosphorylation and activation of several MAP kinase kinases like MAP2K4/SEK1, MAP2K3/MKK3, MAP2K6/MKK6 and MAP2K7/MKK7. These MAP2Ks in turn activate p38 MAPKs and c-jun N-terminal kinases (JNKs). Both p38 MAPK and JNKs control the transcription factors activator protein-1 (AP-1). In Homo sapiens (Human), this protein is Mitogen-activated protein kinase kinase kinase 5 (MAP3K5).